A 310-amino-acid chain; its full sequence is Putative S-adenosyl-L-methionine-dependent methyltransferase MUL_4763 (310 aa).

S-adenosyl-L-methionine is bound by residues Asp-137 and 166-167 (DL).

The protein belongs to the UPF0677 family.

Its function is as follows. Exhibits S-adenosyl-L-methionine-dependent methyltransferase activity. The sequence is that of Putative S-adenosyl-L-methionine-dependent methyltransferase MUL_4763 from Mycobacterium ulcerans (strain Agy99).